The sequence spans 290 residues: Ribosomal protein L11 methyltransferase (290 aa).

Positions 136, 157, 179, and 222 each coordinate S-adenosyl-L-methionine.

It belongs to the methyltransferase superfamily. PrmA family.

Its subcellular location is the cytoplasm. It carries out the reaction L-lysyl-[protein] + 3 S-adenosyl-L-methionine = N(6),N(6),N(6)-trimethyl-L-lysyl-[protein] + 3 S-adenosyl-L-homocysteine + 3 H(+). Methylates ribosomal protein L11. This chain is Ribosomal protein L11 methyltransferase, found in Porphyromonas gingivalis (strain ATCC BAA-308 / W83).